Reading from the N-terminus, the 356-residue chain is Chavicol O-methyltransferase (356 aa).

Gly-202, Asp-225, Asp-245, Met-246, and Lys-259 together coordinate S-adenosyl-L-methionine. His-263 serves as the catalytic Proton acceptor.

This sequence belongs to the class I-like SAM-binding methyltransferase superfamily. Cation-independent O-methyltransferase family. COMT subfamily. As to quaternary structure, homodimer. Specifically expressed in the peltate glandular trichomes on the surface of the young basil leaves.

It catalyses the reaction (E)-isoeugenol + S-adenosyl-L-methionine = (E)-isomethyleugenol + S-adenosyl-L-homocysteine + H(+). It functions in the pathway aromatic compound metabolism; phenylpropanoid biosynthesis. Its function is as follows. Phenylpropene O-methyltransferase that catalyzes the methylation of the para-4-hydroxyl of chavicol to methylchavicol. Can also convert eugenol to methyleugenol but with less affinity. The sequence is that of Chavicol O-methyltransferase (CVOMT1) from Ocimum basilicum (Sweet basil).